The sequence spans 405 residues: Elongation factor Tu (405 aa).

Residues 10–213 (KEHVNVGTIG…AMDEYIPTPE (204 aa)) form the tr-type G domain. A G1 region spans residues 19–26 (GHVDHGKS). 19 to 26 (GHVDHGKS) lines the GTP pocket. Serine 26 contacts Mg(2+). The tract at residues 64-68 (GITIN) is G2. The interval 85 to 88 (DCPG) is G3. Residues 85–89 (DCPGH) and 140–143 (NKCD) each bind GTP. Residues 140 to 143 (NKCD) are G4. The segment at 178–180 (SAL) is G5.

It belongs to the TRAFAC class translation factor GTPase superfamily. Classic translation factor GTPase family. EF-Tu/EF-1A subfamily. As to quaternary structure, monomer.

The protein localises to the cytoplasm. It carries out the reaction GTP + H2O = GDP + phosphate + H(+). Its function is as follows. GTP hydrolase that promotes the GTP-dependent binding of aminoacyl-tRNA to the A-site of ribosomes during protein biosynthesis. The protein is Elongation factor Tu of Aquifex pyrophilus.